The primary structure comprises 123 residues: Ribonuclease P protein component (123 aa).

It belongs to the RnpA family. Consists of a catalytic RNA component (M1 or rnpB) and a protein subunit.

The catalysed reaction is Endonucleolytic cleavage of RNA, removing 5'-extranucleotides from tRNA precursor.. Functionally, RNaseP catalyzes the removal of the 5'-leader sequence from pre-tRNA to produce the mature 5'-terminus. It can also cleave other RNA substrates such as 4.5S RNA. The protein component plays an auxiliary but essential role in vivo by binding to the 5'-leader sequence and broadening the substrate specificity of the ribozyme. In Streptomyces bikiniensis, this protein is Ribonuclease P protein component.